The primary structure comprises 98 residues: Large ribosomal subunit protein uL23 (98 aa).

Belongs to the universal ribosomal protein uL23 family. As to quaternary structure, part of the 50S ribosomal subunit. Contacts protein L29, and trigger factor when it is bound to the ribosome.

Its function is as follows. One of the early assembly proteins it binds 23S rRNA. One of the proteins that surrounds the polypeptide exit tunnel on the outside of the ribosome. Forms the main docking site for trigger factor binding to the ribosome. The protein is Large ribosomal subunit protein uL23 of Methylobacterium sp. (strain 4-46).